The chain runs to 250 residues: Triosephosphate isomerase, cytosolic (250 aa).

Substrate contacts are provided by asparagine 1 and lysine 3. Histidine 87 functions as the Electrophile in the catalytic mechanism. Glutamate 160 serves as the catalytic Proton acceptor.

This sequence belongs to the triosephosphate isomerase family. As to quaternary structure, homodimer.

The protein localises to the cytoplasm. It carries out the reaction D-glyceraldehyde 3-phosphate = dihydroxyacetone phosphate. It functions in the pathway carbohydrate biosynthesis; gluconeogenesis. The protein operates within carbohydrate degradation; glycolysis; D-glyceraldehyde 3-phosphate from glycerone phosphate: step 1/1. This is Triosephosphate isomerase, cytosolic (TPI1) from Gracilaria gracilis (Red alga).